The chain runs to 274 residues: Tropomyosin (274 aa).

Over residues 1 to 35 (MKLEKDNAMDRADTLEQQNKEANNRAEKSEEEVHN) the composition is skewed to basic and acidic residues. A disordered region spans residues 1-45 (MKLEKDNAMDRADTLEQQNKEANNRAEKSEEEVHNLQKRMQQLEN). Residues 1-274 (MKLEKDNAMD…DQTFSELSGY (274 aa)) adopt a coiled-coil conformation.

Belongs to the tropomyosin family. In terms of assembly, homodimer.

Tropomyosin, in association with the troponin complex, plays a central role in the calcium dependent regulation of muscle contraction. The protein is Tropomyosin of Metapenaeus ensis (Greasyback shrimp).